The chain runs to 713 residues: Cyclomaltodextrin glucanotransferase (713 aa).

Positions 1–27 (MKRFMKLTAVWTLWLSLTLGLLSPVHA) are cleaved as a signal peptide. Residues 28 to 165 (APDTSVSNKQ…NIKVIIDFAP (138 aa)) are A1. The Ca(2+) site is built by Asp-54, Asn-56, Asn-59, and Asn-60. Cysteines 70 and 77 form a disulfide. Ca(2+) is bound by residues Gly-78 and Asp-80. 127 to 128 (YW) is a binding site for substrate. Residue Asn-166 coordinates Ca(2+). The tract at residues 166–229 (NHTSPASSDD…NLYDLADLNH (64 aa)) is b. His-167 lines the substrate pocket. Position 217 (Ile-217) interacts with Ca(2+). 220–223 (NLYD) provides a ligand contact to substrate. Asp-226 lines the Ca(2+) pocket. The A2 stretch occupies residues 230 to 433 (NNSSVDVYLK…LRKSNPAIAY (204 aa)). Arg-254 contributes to the substrate binding site. The active-site Nucleophile is Asp-256. A substrate-binding site is contributed by 259–260 (KH). His-260 contacts Ca(2+). Glu-284 acts as the Proton donor in catalysis. Substrate-binding residues include His-354, Asp-398, and Arg-402. Residues 434–522 (GSTHERWINN…GTAVWQYTTD (89 aa)) form a c region. The d stretch occupies residues 523–609 (ATTPIIGNVG…SNIYDNFEVL (87 aa)). The 82-residue stretch at 526–607 (PIIGNVGPMM…AASNIYDNFE (82 aa)) folds into the IPT/TIG domain. A CBM20 domain is found at 608-713 (VLTGDQVTVR…TATVNVNWQP (106 aa)). The segment at 610–713 (TGDQVTVRFV…TATVNVNWQP (104 aa)) is e.

It belongs to the glycosyl hydrolase 13 family. As to quaternary structure, monomer. Ca(2+) is required as a cofactor.

It is found in the secreted. It catalyses the reaction Cyclizes part of a (1-&gt;4)-alpha-D-glucan chain by formation of a (1-&gt;4)-alpha-D-glucosidic bond.. The chain is Cyclomaltodextrin glucanotransferase (cgt) from Bacillus sp. (strain 1011).